A 175-amino-acid polypeptide reads, in one-letter code: CDP-archaeol synthase (175 aa).

The next 4 membrane-spanning stretches (helical) occupy residues 41–61 (GLFS…WLSS), 82–102 (LIVV…KSFF), 122–142 (FVVG…VSNF), and 150–170 (VIII…LIGV).

Belongs to the CDP-archaeol synthase family. Mg(2+) is required as a cofactor.

The protein localises to the cell membrane. It carries out the reaction 2,3-bis-O-(geranylgeranyl)-sn-glycerol 1-phosphate + CTP + H(+) = CDP-2,3-bis-O-(geranylgeranyl)-sn-glycerol + diphosphate. It participates in membrane lipid metabolism; glycerophospholipid metabolism. Functionally, catalyzes the formation of CDP-2,3-bis-(O-geranylgeranyl)-sn-glycerol (CDP-archaeol) from 2,3-bis-(O-geranylgeranyl)-sn-glycerol 1-phosphate (DGGGP) and CTP. This reaction is the third ether-bond-formation step in the biosynthesis of archaeal membrane lipids. The sequence is that of CDP-archaeol synthase from Methanosarcina barkeri (strain Fusaro / DSM 804).